Here is a 120-residue protein sequence, read N- to C-terminus: Small ribosomal subunit protein bS6 (120 aa).

Positions Ser97–Thr112 are enriched in polar residues. Residues Ser97–Asn120 are disordered.

The protein belongs to the bacterial ribosomal protein bS6 family.

In terms of biological role, binds together with bS18 to 16S ribosomal RNA. The sequence is that of Small ribosomal subunit protein bS6 from Rickettsia bellii (strain OSU 85-389).